The following is a 382-amino-acid chain: Alanine racemase (382 aa).

The active-site Proton acceptor; specific for D-alanine is the lysine 37. Lysine 37 carries the N6-(pyridoxal phosphate)lysine modification. Arginine 135 contributes to the substrate binding site. Tyrosine 267 (proton acceptor; specific for L-alanine) is an active-site residue. Methionine 315 provides a ligand contact to substrate.

It belongs to the alanine racemase family. The cofactor is pyridoxal 5'-phosphate.

The enzyme catalyses L-alanine = D-alanine. It participates in amino-acid biosynthesis; D-alanine biosynthesis; D-alanine from L-alanine: step 1/1. In terms of biological role, catalyzes the interconversion of L-alanine and D-alanine. May also act on other amino acids. This is Alanine racemase (alr) from Geobacter sulfurreducens (strain ATCC 51573 / DSM 12127 / PCA).